Consider the following 402-residue polypeptide: Zinc finger CCCH domain-containing protein 35 (402 aa).

C3H1-type zinc fingers lie at residues 117-144 (CYSG…HGVF) and 152-176 (RYRT…HTPD). Disordered stretches follow at residues 180 to 211 (VLPP…AESY) and 232 to 258 (SSPT…DAAG). Over residues 183–192 (PSQQQGSNSP) the composition is skewed to polar residues. The segment covering 232–241 (SSPTSTLVSP) has biased composition (low complexity). A compositionally biased stretch (pro residues) spans 242–253 (PRSPPSESPPLS).

The sequence is that of Zinc finger CCCH domain-containing protein 35 from Oryza sativa subsp. japonica (Rice).